Reading from the N-terminus, the 875-residue chain is GATOR2 complex protein MIOS (875 aa).

WD repeat units lie at residues 58–100 (SDTP…NSKF), 111–155 (KHAR…TPDI), 182–221 (GQNDASLSLCWLPRDQKLLLAGMHRNLAIFDLRNTSQKMF), 223–261 (NTKAVQGVTVDPYFHDRVASFYEGQVAIWDLRKFEKPVL), 265–306 (EQPK…TPIG), 320–360 (PCDN…SLAW), and 395–437 (RLRA…KQYT). The C4-type zinc-finger motif lies at 735–781 (VSCNFCGKSISYSCSSVPHQGRGFSQYGVSGSPTKSKVTSCPGCRKP). 2 residues coordinate Zn(2+): cysteine 737 and cysteine 740. Phosphoserine occurs at positions 759 and 766. Zn(2+) contacts are provided by cysteine 775, cysteine 778, cysteine 788, cysteine 827, cysteine 830, histidine 832, histidine 835, histidine 838, cysteine 849, cysteine 854, and cysteine 858. The segment at 782 to 863 (LPRCALCLIN…CTCKCMQLDT (82 aa)) adopts an RING-type; atypical zinc-finger fold.

It belongs to the WD repeat mio family. In terms of assembly, component of the GATOR2 subcomplex, composed of MIOS, SEC13, SEH1L, WDR24 and WDR59. The GATOR2 complex interacts with CASTOR1 and CASTOR2; the interaction is negatively regulated by arginine. CASTOR1 and CASTOR2 convey leucine availability via direct interaction with MIOS. The GATOR2 complex interacts with SESN1, SESN2 and SESN3; the interaction is negatively regulated by amino acids. Interacts with SAR1A and SAR1B; the interaction is direct, disrupted by leucine and mediates the interaction of SAR1A or SAR1B with the GATOR2 complex to negatively regulate the TORC1 signaling upon leucine deprivation. In terms of tissue distribution, widely expressed. In brain, expressed in neurons and glia (oligodendrocytes and astrocytes), with more abundance in neurons.

It localises to the lysosome membrane. With respect to regulation, the GATOR2 complex is negatively regulated by the upstream amino acid sensors CASTOR1 and SESN2, which sequester the GATOR2 complex in absence of amino acids. In the presence of abundant amino acids, GATOR2 is released from CASTOR1 and SESN2 and activated. Its function is as follows. As a component of the GATOR2 complex, functions as an activator of the amino acid-sensing branch of the mTORC1 signaling pathway. The GATOR2 complex indirectly activates mTORC1 through the inhibition of the GATOR1 subcomplex. GATOR2 probably acts as an E3 ubiquitin-protein ligase toward GATOR1. In the presence of abundant amino acids, the GATOR2 complex mediates ubiquitination of the NPRL2 core component of the GATOR1 complex, leading to GATOR1 inactivation. In the absence of amino acids, GATOR2 is inhibited, activating the GATOR1 complex. Within the GATOR2 complex, MIOS is required to prevent autoubiquitination of WDR24, the catalytic subunit of the complex. The GATOR2 complex is required for brain myelination. This Mus musculus (Mouse) protein is GATOR2 complex protein MIOS.